The primary structure comprises 432 residues: Probable anion transporter 5 (432 aa).

The signal sequence occupies residues 1 to 23 (MKLSNIPQRYVIVFLTFLSTCVC). The next 11 helical transmembrane spans lie at 50–70 (TILS…GWAA), 78–98 (VLLL…LDPN), 101–121 (GLLV…FPSI), 140–160 (ITTS…PALV), 164–184 (GPES…LLWI), 229–249 (LPVW…YVLM), 273–293 (VPYL…DYLI), 305–325 (KFLN…LPMF), 331–351 (VILC…GFAV), 360–380 (YAGI…IIGV), and 405–425 (VVFF…LLFS).

This sequence belongs to the major facilitator superfamily. Sodium/anion cotransporter (TC 2.A.1.14) family. As to expression, ubiquitous.

It is found in the golgi apparatus membrane. Its function is as follows. Inorganic phosphate and probable anion transporter. The sequence is that of Probable anion transporter 5 (ANTR5) from Arabidopsis thaliana (Mouse-ear cress).